The primary structure comprises 367 residues: Cis-3-hydroxy-L-proline dehydratase (367 aa).

K165 functions as the Proton donor/acceptor in the catalytic mechanism. Positions 193, 218, and 241 each coordinate Mg(2+). K265 (proton donor/acceptor) is an active-site residue.

It belongs to the mandelate racemase/muconate lactonizing enzyme family. It depends on Mg(2+) as a cofactor.

The enzyme catalyses cis-3-hydroxy-L-proline = 1-pyrroline-2-carboxylate + H2O. Catalyzes the dehydration of cis-3-hydroxy-L-proline (c3LHyp) to Delta(1)-pyrroline-2-carboxylate (Pyr2C). Is likely involved in a degradation pathway that converts c3LHyp to L-proline, which allows L.aggregata to grow on c3LHyp as a sole carbon source. Also catalyzes the epimerization of c3LHyp to trans-3-hydroxy-D-proline (t3DHyp), a competing reaction occurring from the same enolate anion intermediate. L-proline, t3LHyp, t4LHyp, c4DHyp and their methylated derivatives are not substrates. This chain is Cis-3-hydroxy-L-proline dehydratase, found in Roseibium aggregatum (strain ATCC 25650 / DSM 13394 / JCM 20685 / NBRC 16684 / NCIMB 2208 / IAM 12614 / B1) (Stappia aggregata).